A 715-amino-acid chain; its full sequence is Interferon-induced GTP-binding protein Mx2 (715 aa).

Positions 115 to 387 constitute a Dynamin-type G domain; it reads DLALPAIAVI…LIMHIQKSLP (273 aa). The tract at residues 125-132 is G1 motif; the sequence is GDQSSGKS. A GTP-binding site is contributed by 125–132; the sequence is GDQSSGKS. The tract at residues 150-152 is G2 motif; sequence VTR. Positions 225 to 228 are G3 motif; it reads DLPG. Residues 225 to 229 and 294 to 297 contribute to the GTP site; these read DLPGI and TKPD. The segment at 294-297 is G4 motif; sequence TKPD. Residues 326–329 form a G5 motif region; that stretch reads KCRG. The GED domain maps to 623-714; that stretch reads FTEIGIHLNA…ALCQFSSKEI (92 aa).

Belongs to the TRAFAC class dynamin-like GTPase superfamily. Dynamin/Fzo/YdjA family.

The protein resides in the cytoplasm. Its subcellular location is the nucleus. It is found in the nuclear pore complex. In terms of biological role, interferon-induced dynamin-like GTPase with potent antiviral activity against human immunodeficiency virus type 1 (HIV-1). Acts by targeting the viral capsid and affects the nuclear uptake and/or stability of the HIV-1 replication complex and the subsequent chromosomal integration of the proviral DNA. Exhibits antiviral activity also against simian immunodeficiency virus (SIV-mnd). May play a role in regulating nucleocytoplasmic transport and cell-cycle progression. The polypeptide is Interferon-induced GTP-binding protein Mx2 (MX2) (Homo sapiens (Human)).